The sequence spans 338 residues: tRNA N6-adenosine threonylcarbamoyltransferase (338 aa).

Fe cation is bound by residues histidine 111 and histidine 115. Substrate is bound by residues 134–138 (LLSGG), aspartate 167, glycine 180, and asparagine 275. A Fe cation-binding site is contributed by aspartate 304.

It belongs to the KAE1 / TsaD family. It depends on Fe(2+) as a cofactor.

Its subcellular location is the cytoplasm. It catalyses the reaction L-threonylcarbamoyladenylate + adenosine(37) in tRNA = N(6)-L-threonylcarbamoyladenosine(37) in tRNA + AMP + H(+). In terms of biological role, required for the formation of a threonylcarbamoyl group on adenosine at position 37 (t(6)A37) in tRNAs that read codons beginning with adenine. Is involved in the transfer of the threonylcarbamoyl moiety of threonylcarbamoyl-AMP (TC-AMP) to the N6 group of A37, together with TsaE and TsaB. TsaD likely plays a direct catalytic role in this reaction. This chain is tRNA N6-adenosine threonylcarbamoyltransferase, found in Leptospira interrogans serogroup Icterohaemorrhagiae serovar copenhageni (strain Fiocruz L1-130).